Reading from the N-terminus, the 503-residue chain is Lycopene beta cyclase, chloroplastic/chromoplastic (503 aa).

Residues 1 to 85 (MDTLLRTHNR…DLPLYDPSKA (85 aa)) constitute a chloroplast and chromoplast transit peptide. Residue 90–117 (LAVVGGGPLARSCSTSLGGGLSVVSIDP) coordinates NAD(+).

The protein belongs to the lycopene cyclase family.

It is found in the plastid. The protein localises to the chloroplast. The protein resides in the chromoplast. It localises to the chromoplast membrane. Its subcellular location is the chloroplast membrane. It carries out the reaction a carotenoid psi-end group = a carotenoid beta-end derivative. It participates in carotenoid biosynthesis; beta-carotene biosynthesis. The protein operates within carotenoid biosynthesis; beta-zeacarotene biosynthesis. Its function is as follows. Catalyzes the double cyclization reaction which converts lycopene to beta-carotene and neurosporene to beta-zeacarotene. The protein is Lycopene beta cyclase, chloroplastic/chromoplastic (LCY1) of Narcissus pseudonarcissus (Daffodil).